We begin with the raw amino-acid sequence, 54 residues long: Rubredoxin-1 (54 aa).

Residues 1-52 form the Rubredoxin-like domain; sequence MKKWECVVCGFIYDEAEGLPDEGIEPGTAWNNVPEDWVCPDCGVGKDDFEMV. Residues Cys-6, Cys-9, Cys-39, and Cys-42 each contribute to the Fe cation site.

It belongs to the rubredoxin family. Fe(3+) serves as cofactor.

It localises to the cytoplasm. It functions in the pathway hydrocarbon metabolism; alkane degradation. Its function is as follows. Involved in the hydrocarbon hydroxylating system, which transfers electrons from NADH to rubredoxin reductase and then through rubredoxin to alkane 1 monooxygenase. The sequence is that of Rubredoxin-1 (rubA) from Alcanivorax borkumensis (strain ATCC 700651 / DSM 11573 / NCIMB 13689 / SK2).